We begin with the raw amino-acid sequence, 820 residues long: Leucine--tRNA ligase (820 aa).

Residues 40–51 carry the 'HIGH' region motif; that stretch reads PYPSGAGLHVGH. A 'KMSKS' region motif is present at residues 601-605; it reads KMSKS. An ATP-binding site is contributed by K604.

The protein belongs to the class-I aminoacyl-tRNA synthetase family.

It is found in the cytoplasm. The enzyme catalyses tRNA(Leu) + L-leucine + ATP = L-leucyl-tRNA(Leu) + AMP + diphosphate. This Chlamydia caviae (strain ATCC VR-813 / DSM 19441 / 03DC25 / GPIC) (Chlamydophila caviae) protein is Leucine--tRNA ligase.